A 387-amino-acid chain; its full sequence is Double C2-like domain-containing protein gamma (387 aa).

2 consecutive C2 domains span residues 83–209 (ALGT…DICL) and 243–376 (ERGR…ELWH). D274, D280, D334, D336, and D342 together coordinate Ca(2+).

Ca(2+) is required as a cofactor.

Functionally, may be involved in regulation of vesicular trafficking. In vitro, does not bind calcium and phospholipids. This chain is Double C2-like domain-containing protein gamma (Doc2g), found in Mus musculus (Mouse).